Reading from the N-terminus, the 96-residue chain is Putative pterin-4-alpha-carbinolamine dehydratase (96 aa).

The protein belongs to the pterin-4-alpha-carbinolamine dehydratase family.

It carries out the reaction (4aS,6R)-4a-hydroxy-L-erythro-5,6,7,8-tetrahydrobiopterin = (6R)-L-erythro-6,7-dihydrobiopterin + H2O. The polypeptide is Putative pterin-4-alpha-carbinolamine dehydratase (Paraburkholderia phytofirmans (strain DSM 17436 / LMG 22146 / PsJN) (Burkholderia phytofirmans)).